Here is a 449-residue protein sequence, read N- to C-terminus: Putative methylthiotransferase MJ0865 (449 aa).

Positions 163–390 constitute a Radical SAM core domain; that stretch reads SIRGANVYIE…EGEYRKLGLS (228 aa). 3 residues coordinate [4Fe-4S] cluster: cysteine 177, cysteine 181, and cysteine 184.

The protein belongs to the methylthiotransferase family. Requires [4Fe-4S] cluster as cofactor.

The polypeptide is Putative methylthiotransferase MJ0865 (Methanocaldococcus jannaschii (strain ATCC 43067 / DSM 2661 / JAL-1 / JCM 10045 / NBRC 100440) (Methanococcus jannaschii)).